The primary structure comprises 362 residues: Protein RecA (362 aa).

ATP is bound at residue 77-84 (GPESSGKT).

The protein belongs to the RecA family.

The protein localises to the cytoplasm. Functionally, can catalyze the hydrolysis of ATP in the presence of single-stranded DNA, the ATP-dependent uptake of single-stranded DNA by duplex DNA, and the ATP-dependent hybridization of homologous single-stranded DNAs. It interacts with LexA causing its activation and leading to its autocatalytic cleavage. In Rhizobium etli (strain ATCC 51251 / DSM 11541 / JCM 21823 / NBRC 15573 / CFN 42), this protein is Protein RecA.